Here is a 309-residue protein sequence, read N- to C-terminus: Porphobilinogen deaminase (309 aa).

Cys241 carries the post-translational modification S-(dipyrrolylmethanemethyl)cysteine.

This sequence belongs to the HMBS family. In terms of assembly, monomer. Dipyrromethane is required as a cofactor.

The catalysed reaction is 4 porphobilinogen + H2O = hydroxymethylbilane + 4 NH4(+). It functions in the pathway porphyrin-containing compound metabolism; protoporphyrin-IX biosynthesis; coproporphyrinogen-III from 5-aminolevulinate: step 2/4. Its function is as follows. Tetrapolymerization of the monopyrrole PBG into the hydroxymethylbilane pre-uroporphyrinogen in several discrete steps. This is Porphobilinogen deaminase from Oceanobacillus iheyensis (strain DSM 14371 / CIP 107618 / JCM 11309 / KCTC 3954 / HTE831).